The following is a 188-amino-acid chain: ATP synthase subunit delta (188 aa).

It belongs to the ATPase delta chain family. In terms of assembly, F-type ATPases have 2 components, F(1) - the catalytic core - and F(0) - the membrane proton channel. F(1) has five subunits: alpha(3), beta(3), gamma(1), delta(1), epsilon(1). F(0) has three main subunits: a(1), b(2) and c(10-14). The alpha and beta chains form an alternating ring which encloses part of the gamma chain. F(1) is attached to F(0) by a central stalk formed by the gamma and epsilon chains, while a peripheral stalk is formed by the delta and b chains.

The protein resides in the cell inner membrane. Functionally, f(1)F(0) ATP synthase produces ATP from ADP in the presence of a proton or sodium gradient. F-type ATPases consist of two structural domains, F(1) containing the extramembraneous catalytic core and F(0) containing the membrane proton channel, linked together by a central stalk and a peripheral stalk. During catalysis, ATP synthesis in the catalytic domain of F(1) is coupled via a rotary mechanism of the central stalk subunits to proton translocation. This protein is part of the stalk that links CF(0) to CF(1). It either transmits conformational changes from CF(0) to CF(1) or is implicated in proton conduction. The chain is ATP synthase subunit delta from Rhizobium etli (strain ATCC 51251 / DSM 11541 / JCM 21823 / NBRC 15573 / CFN 42).